The chain runs to 79 residues: DNA-directed RNA polymerase subunit omega (79 aa).

The protein belongs to the RNA polymerase subunit omega family. The RNAP catalytic core consists of 2 alpha, 1 beta, 1 beta' and 1 omega subunit. When a sigma factor is associated with the core the holoenzyme is formed, which can initiate transcription.

It catalyses the reaction RNA(n) + a ribonucleoside 5'-triphosphate = RNA(n+1) + diphosphate. Promotes RNA polymerase assembly. Latches the N- and C-terminal regions of the beta' subunit thereby facilitating its interaction with the beta and alpha subunits. The sequence is that of DNA-directed RNA polymerase subunit omega from Bdellovibrio bacteriovorus (strain ATCC 15356 / DSM 50701 / NCIMB 9529 / HD100).